The sequence spans 298 residues: Iron-regulated virulence regulatory protein IrgB (298 aa).

One can recognise an HTH lysR-type domain in the interval 1–59 (MQDLSAVKAFHALCQHKSLTAAAKALEQPKSTLSRRLAQLEEDLGQSLLMRQGNRLTLT). A DNA-binding region (H-T-H motif) is located at residues 19–38 (LTAAAKALEQPKSTLSRRLA).

Belongs to the LysR transcriptional regulatory family.

Transcription activation of the irgA gene. In the presence of sufficient iron, transcription of both irgA and irgB is negatively regulated by a fur-like protein. In low iron conditions, negative regulation of transcription is removed, and production of IrgB leads to positive transcriptional activation of irgA. This chain is Iron-regulated virulence regulatory protein IrgB (irgB), found in Vibrio cholerae serotype O1 (strain ATCC 39541 / Classical Ogawa 395 / O395).